A 292-amino-acid polypeptide reads, in one-letter code: Ribosomal protein L11 methyltransferase (292 aa).

Residues Thr-143, Gly-164, Asp-186, and Asn-228 each contribute to the S-adenosyl-L-methionine site.

This sequence belongs to the methyltransferase superfamily. PrmA family.

It is found in the cytoplasm. It carries out the reaction L-lysyl-[protein] + 3 S-adenosyl-L-methionine = N(6),N(6),N(6)-trimethyl-L-lysyl-[protein] + 3 S-adenosyl-L-homocysteine + 3 H(+). Functionally, methylates ribosomal protein L11. The protein is Ribosomal protein L11 methyltransferase of Tolumonas auensis (strain DSM 9187 / NBRC 110442 / TA 4).